A 62-amino-acid chain; its full sequence is MGKQCFVTGRKASTGNHRSHALNANKRRWNANLQKVRILVDGKPKKVWVSARALKSGKVTRV.

Belongs to the bacterial ribosomal protein bL28 family.

The chain is Large ribosomal subunit protein bL28 from Staphylococcus epidermidis (strain ATCC 12228 / FDA PCI 1200).